A 1359-amino-acid chain; its full sequence is NPC1-like intracellular cholesterol transporter 1 (1359 aa).

Positions 1-21 are cleaved as a signal peptide; sequence MAEAGLRGWLLWALLLRLAQS. Over 22–284 the chain is Extracellular; the sequence is EPYTTIHQPG…TFYLGQMPGS (263 aa). 9 disulfide bridges follow: C33/C90, C39/C57, C78/C125, C91/C129, C113/C254, C116/C172, C189/C197, C243/C259, and C256/C263. A glycan (N-linked (GlcNAc...) asparagine) is linked at N54. 2 N-linked (GlcNAc...) asparagine glycosylation sites follow: N132 and N138. N-linked (GlcNAc...) asparagine glycosylation occurs at N244. The helical transmembrane segment at 285-305 threads the bilayer; sequence LVLIIILCSVFAVVTILLVGF. At 306–351 the chain is on the cytoplasmic side; the sequence is RVAPARDKSKMVDPKKGTSLSDKLSFSTHTLLGQFFQGWGTWVASW. Residues 352-372 form a helical membrane-spanning segment; that stretch reads PLTILVLSVIPVVALAAGLVF. Topologically, residues 373-632 are extracellular; sequence TELTTDPVEL…DEINRTTAED (260 aa). N-linked (GlcNAc...) asparagine glycans are attached at residues N416, N431, N464, N479, N497, and N506. The cysteines at positions 471 and 485 are disulfide-linked. An intrachain disulfide couples C525 to C542. N626 carries an N-linked (GlcNAc...) asparagine glycan. In terms of domain architecture, SSD spans 632–797; it reads DLPIFATSYI…MSAFVALLSL (166 aa). Residues 633–653 traverse the membrane as a helical segment; sequence LPIFATSYIVIFLYISLALGS. At 654–666 the chain is on the cytoplasmic side; the sequence is YSSWSRVMVDSKA. A helical transmembrane segment spans residues 667 to 687; sequence TLGLGGVAVVLGAVMAAMGFF. Topologically, residues 688-696 are extracellular; that stretch reads SYLGIRSSL. A helical membrane pass occupies residues 697–717; sequence VILQVVPFLVLSVGADNIFIF. At 718-742 the chain is on the cytoplasmic side; that stretch reads VLEYQRLPRRPGEPREVHIGRALGR. The helical transmembrane segment at 743–763 threads the bilayer; that stretch reads VAPSMLLCSLSEAICFFLGAL. The Extracellular portion of the chain corresponds to 764–776; the sequence is TPMPAVRTFALTS. Residues 777–797 form a helical membrane-spanning segment; it reads GLAVILDFLLQMSAFVALLSL. Over 798–846 the chain is Cytoplasmic; that stretch reads DSKRQEASRLDVCCCVKPQELPPPGQGEGLLLGFFQKAYAPFLLHWITR. A helical transmembrane segment spans residues 847 to 867; it reads GVVLLLFLALFGVSLYSMCHI. Over 868–1139 the chain is Extracellular; the sequence is SVGLDQELAL…EQYLTILPEG (272 aa). Intrachain disulfides connect C920/C925, C966/C1024, and C980/C989. A helical membrane pass occupies residues 1140–1160; it reads LFMLSLCLVPTFAVSCLLLGL. At 1161–1168 the chain is on the cytoplasmic side; the sequence is DLRSGLLN. Residues 1169-1189 form a helical membrane-spanning segment; it reads LLSIVMILVDTVGFMALWGIS. Over 1190-1191 the chain is Extracellular; it reads YN. The helical transmembrane segment at 1192–1212 threads the bilayer; sequence AVSLINLVSAVGMSVEFVSHI. Residues 1213 to 1236 are Cytoplasmic-facing; the sequence is TRSFAISTKPTWLERAKEATISMG. The chain crosses the membrane as a helical span at residues 1237–1257; the sequence is SAVFAGVAMTNLPGILVLGLA. Residues 1258 to 1268 are Extracellular-facing; that stretch reads KAQLIQIFFFR. A helical transmembrane segment spans residues 1269–1289; the sequence is LNLLITLLGLLHGLVFLPVIL. The Cytoplasmic segment spans residues 1290 to 1359; it reads SYVGPDVNPA…NFLPNNGRQF (70 aa).

The protein belongs to the patched family. In terms of assembly, interacts with RAB11A, MYO5B and RAB11FIP2. Interaction with RAB11A, MYO5B and RAB11FIP2 is required for proper transport to the plasma membrane upon cholesterol depletion. Interacts with NPC2. Interacts with LIMA1. Post-translationally, highly glycosylated. As to expression, widely expressed. Expressed in liver. Also expressed in small intestine, pancreas, kidney, lung, pancreas, spleen, heart, gall bladder, brain, testis, stomach and muscle.

It localises to the apical cell membrane. It is found in the cell membrane. The protein localises to the cytoplasmic vesicle membrane. The catalysed reaction is cholesterol(in) = cholesterol(out). The enzyme catalyses sitosterol(out) = sitosterol(in). Its function is as follows. Plays a major role in cholesterol homeostasis. Critical for the uptake of cholesterol across the plasma membrane of the intestinal enterocyte. Involved in plant sterol absorption, it transports sitosterol, although at lower rates than cholesterol. Is the direct molecular target of ezetimibe, a drug that inhibits cholesterol absorption and is approved for the treatment of hypercholesterolemia. May have a function in the transport of multiple lipids and their homeostasis, thereby influencing lipid metabolism regulation. May be involved in caveolin trafficking from the plasma membrane. In addition, acts as a negative regulator of NPC2 and down-regulates its expression and secretion by inhibiting its maturation and accelerating its degradation. This is NPC1-like intracellular cholesterol transporter 1 from Homo sapiens (Human).